We begin with the raw amino-acid sequence, 722 residues long: uncharacterized protein (722 aa).

This is an uncharacterized protein from Treponema pallidum (strain Nichols).